The chain runs to 258 residues: MDGIIEQKSMLVHSKISDAGKRNGLINTRNLMAESRDGLVSVYPAPQYQSHRVGASTVPASLDSSRSEPMQQLLDPNTLQQSVESRYRPNIILYSEGVLRSWGDGVAADCCETTFIEDRSPTKDSLEYPDGKFIDLSADDIKIHTLSYDVEEEEEFQELESDYSSDTESEDNFLMMPPRDHLGLSVFSMLCCFWPLGIAAFYLSHETNKAVAKGDLHQASTSSRRALFLAVLSITIGTGVYVGVAVALIAYLSKNNHL.

Residues 1–181 (MDGIIEQKSM…NFLMMPPRDH (181 aa)) are Cytoplasmic-facing. A Phosphoserine modification is found at Ser137. Residues 182 to 202 (LGLSVFSMLCCFWPLGIAAFY) form a helical membrane-spanning segment. The Extracellular portion of the chain corresponds to 203-228 (LSHETNKAVAKGDLHQASTSSRRALF). The segment at residues 229–249 (LAVLSITIGTGVYVGVAVALI) is an intramembrane region (helical). The Extracellular portion of the chain corresponds to 250-258 (AYLSKNNHL).

This sequence belongs to the CD225/Dispanin family. In terms of assembly, homodimer. Interacts with GRIA1 and GRIA2.

Its subcellular location is the cell membrane. The protein localises to the early endosome membrane. The protein resides in the postsynaptic density membrane. It localises to the synapse. It is found in the cell projection. Its subcellular location is the dendrite. The protein localises to the dendritic spine. Its function is as follows. May regulate AMPA receptor content at nascent synapses, and have a role in postsynaptic development and maturation. The polypeptide is Synapse differentiation-inducing gene protein 1 (SYNDIG1) (Homo sapiens (Human)).